Reading from the N-terminus, the 614-residue chain is Sodium- and chloride-dependent betaine transporter (614 aa).

The disordered stretch occupies residues 1–33 (MDRKVAVPEDGPPVVSWLPEEGEKLDQEGEDQV). The Cytoplasmic segment spans residues 1–44 (MDRKVAVPEDGPPVVSWLPEEGEKLDQEGEDQVKDRGQWTNKME). A compositionally biased stretch (basic and acidic residues) spans 21 to 33 (EGEKLDQEGEDQV). 3 helical membrane passes run 45–65 (FVLS…FPYL), 73–92 (AFFI…VFFL), and 117–137 (GIGL…IIIL). Topologically, residues 138–210 (AWALFYLFSS…SGIHDLGALR (73 aa)) are extracellular. Cys-157 and Cys-166 are joined by a disulfide. 2 N-linked (GlcNAc...) asparagine glycosylation sites follow: Asn-171 and Asn-183. 9 helical membrane-spanning segments follow: residues 211 to 229 (WELA…FCIW), 238 to 255 (VVYF…ILLI), 291 to 308 (IFFS…LGSY), 320 to 341 (IALC…FSIL), 374 to 393 (MPLS…FLGL), 423 to 441 (LLIL…FLVT), 458 to 478 (GICL…VYGA), 499 to 518 (ISWL…FSLS), and 538 to 556 (IGWF…FVII). Over 557–614 (TLLKTRGSFKKRLRQLTTPDPSLPQPKQHLYLDGGTSQDCGPSPTKEGLIVGEKETHL) the chain is Cytoplasmic. A disordered region spans residues 591–614 (GTSQDCGPSPTKEGLIVGEKETHL).

Belongs to the sodium:neurotransmitter symporter (SNF) (TC 2.A.22) family. SLC6A12 subfamily. As to quaternary structure, interacts with LIN7C. In terms of tissue distribution, kidney.

It localises to the basolateral cell membrane. The protein localises to the cell membrane. It catalyses the reaction 4-aminobutanoate(out) + chloride(out) + 3 Na(+)(out) = 4-aminobutanoate(in) + chloride(in) + 3 Na(+)(in). The catalysed reaction is glycine betaine(out) + 2 chloride(out) + 3 Na(+)(out) = glycine betaine(in) + 2 chloride(in) + 3 Na(+)(in). Functionally, transporter that mediates cellular uptake of betaine and GABA in a sodium- and chloride-dependent process. May have a role in regulation of GABAergic transmission in the brain through the reuptake of GABA into presynaptic terminals, as well as in osmotic regulation. Probably also involved in renal and hepatic osmotic regulation. This chain is Sodium- and chloride-dependent betaine transporter (SLC6A12), found in Canis lupus familiaris (Dog).